The following is a 404-amino-acid chain: uncharacterized protein (404 aa).

2 helical membrane passes run Ile35–Leu55 and Glu92–Ile112.

The protein localises to the membrane. This is an uncharacterized protein from Saccharomyces cerevisiae (strain ATCC 204508 / S288c) (Baker's yeast).